Consider the following 677-residue polypeptide: Methionine--tRNA ligase (677 aa).

Residues 15 to 25 (PYANGSIHLGH) carry the 'HIGH' region motif. Residues cysteine 146, cysteine 149, cysteine 159, and cysteine 162 each contribute to the Zn(2+) site. Residues 333-337 (KMSKS) carry the 'KMSKS' region motif. Lysine 336 contacts ATP. Positions 575 to 677 (DFAKVDLRVA…AGAKPGHQVK (103 aa)) constitute a tRNA-binding domain.

Belongs to the class-I aminoacyl-tRNA synthetase family. MetG type 1 subfamily. In terms of assembly, homodimer. It depends on Zn(2+) as a cofactor.

It localises to the cytoplasm. The catalysed reaction is tRNA(Met) + L-methionine + ATP = L-methionyl-tRNA(Met) + AMP + diphosphate. Its function is as follows. Is required not only for elongation of protein synthesis but also for the initiation of all mRNA translation through initiator tRNA(fMet) aminoacylation. This chain is Methionine--tRNA ligase, found in Escherichia coli O81 (strain ED1a).